A 500-amino-acid chain; its full sequence is Aspartyl/glutamyl-tRNA(Asn/Gln) amidotransferase subunit B (500 aa).

The protein belongs to the GatB/GatE family. GatB subfamily. In terms of assembly, heterotrimer of A, B and C subunits.

It catalyses the reaction L-glutamyl-tRNA(Gln) + L-glutamine + ATP + H2O = L-glutaminyl-tRNA(Gln) + L-glutamate + ADP + phosphate + H(+). The catalysed reaction is L-aspartyl-tRNA(Asn) + L-glutamine + ATP + H2O = L-asparaginyl-tRNA(Asn) + L-glutamate + ADP + phosphate + 2 H(+). In terms of biological role, allows the formation of correctly charged Asn-tRNA(Asn) or Gln-tRNA(Gln) through the transamidation of misacylated Asp-tRNA(Asn) or Glu-tRNA(Gln) in organisms which lack either or both of asparaginyl-tRNA or glutaminyl-tRNA synthetases. The reaction takes place in the presence of glutamine and ATP through an activated phospho-Asp-tRNA(Asn) or phospho-Glu-tRNA(Gln). This chain is Aspartyl/glutamyl-tRNA(Asn/Gln) amidotransferase subunit B, found in Allorhizobium ampelinum (strain ATCC BAA-846 / DSM 112012 / S4) (Agrobacterium vitis (strain S4)).